The primary structure comprises 193 residues: MKPLVVFVLGGPGAGKGTQCERIVQKYGYTHLSAGDLLRDERKKPDSQYGELIESYIRDGKIVPVEITISLLQRAMERTMAFDANKHKFLIDGFPRNEDNLQGWERTMNGKADVSFVLFFDCDNETCIERCLERGKSSGRSDDNRESLEKRIQTYLQSTRPIIDLYEKRGKVRKVDASKSVDEVFTKVQNIFD.

An ATP-binding site is contributed by 13–18 (GAGKGT). Residues 33–63 (SAGDLLRDERKKPDSQYGELIESYIRDGKIV) are NMP. A ribonucleoside 5'-phosphate-binding positions include Arg39, 61–63 (KIV), and 93–96 (GFPR). Asn100 provides a ligand contact to CMP. Positions 133-143 (ERGKSSGRSDD) are LID. Position 134 (Arg134) interacts with ATP. Arg140 and Arg151 together coordinate a ribonucleoside 5'-phosphate. Position 179 (Lys179) interacts with ATP.

The protein belongs to the adenylate kinase family. UMP-CMP kinase subfamily. Monomer. The cofactor is Mg(2+).

It localises to the nucleus. The protein localises to the cytoplasm. The catalysed reaction is CMP + ATP = CDP + ADP. It carries out the reaction dCMP + ATP = dCDP + ADP. It catalyses the reaction UMP + ATP = UDP + ADP. The enzyme catalyses a 2'-deoxyribonucleoside 5'-diphosphate + ATP = a 2'-deoxyribonucleoside 5'-triphosphate + ADP. The catalysed reaction is a ribonucleoside 5'-diphosphate + ATP = a ribonucleoside 5'-triphosphate + ADP. Catalyzes the phosphorylation of pyrimidine nucleoside monophosphates at the expense of ATP. Plays an important role in de novo pyrimidine nucleotide biosynthesis. Has preference for UMP and CMP as phosphate acceptors. Also displays broad nucleoside diphosphate kinase activity. This Xenopus laevis (African clawed frog) protein is UMP-CMP kinase (cmpk1).